Consider the following 20-residue polypeptide: Fibrinogen (20 aa).

Residues 1–20 (LHSNLEYQYRYSGRVASGIP) enclose the Vitellogenin domain.

Secreted into the hemolymph.

It localises to the secreted. Its subcellular location is the extracellular space. Functionally, involved in lipid transport. Plays a role in hemolymph clotting. May be involved in wound healing in the cuticle. The chain is Fibrinogen from Pacifastacus leniusculus (Signal crayfish).